Reading from the N-terminus, the 463-residue chain is Glycine--tRNA ligase (463 aa).

Arginine 98 and glutamate 174 together coordinate substrate. Residues 206–208, 216–221, 290–291, and 334–337 contribute to the ATP site; these read RNE, FRTREF, EL, and GADR. Residue 221–225 participates in substrate binding; sequence FEQME. 330-334 is a binding site for substrate; it reads EPSLG.

It belongs to the class-II aminoacyl-tRNA synthetase family. In terms of assembly, homodimer.

The protein localises to the cytoplasm. The catalysed reaction is tRNA(Gly) + glycine + ATP = glycyl-tRNA(Gly) + AMP + diphosphate. Catalyzes the attachment of glycine to tRNA(Gly). This chain is Glycine--tRNA ligase, found in Staphylococcus haemolyticus (strain JCSC1435).